Consider the following 868-residue polypeptide: Protein NIP100 (868 aa).

The CAP-Gly domain maps to 34–84 (GETQFAKGIWYGIELDKPLGKNDGSANGIRYFDIDLKKANSNGGYYGLFCK). 3 coiled-coil regions span residues 101–175 (LNGN…HLDN), 207–375 (LDQT…QEEL), and 645–776 (SLLS…QIKE).

As to quaternary structure, component of the dynactin complex composed of at least ARP1, JNM1, NIP100 and ARP10. Dynactin comprises a short rod of the ARP1 filament attached to ARP10 at its pointed-end and probably associated with the capping protein at its barbed-end. The rod is implicated in dynein cargo binding. A sidearm formed by NIP100 projects from the ARP1 filament and is implicated in motor binding.

The protein localises to the cytoplasm. It localises to the cytoskeleton. It is found in the spindle pole. In terms of biological role, motor-binding component of the dynactin complex which assists cytoplasmic dynein by increasing its processivity and by regulation of its cargo binding. The dynactin complex is required for the spindle translocation late in anaphase and is involved in a cell wall synthesis checkpoint. This Saccharomyces cerevisiae (strain ATCC 204508 / S288c) (Baker's yeast) protein is Protein NIP100 (NIP100).